A 607-amino-acid chain; its full sequence is UvrABC system protein C (607 aa).

The region spanning 16-94 (GRPGVYRMFD…IKEWRPPYNI (79 aa)) is the GIY-YIG domain. Positions 203 to 238 (QQLGNELNAEMEKAAMALNFEKAAELRDQIALLRRV) constitute a UVR domain.

It belongs to the UvrC family. Interacts with UvrB in an incision complex.

The protein localises to the cytoplasm. The UvrABC repair system catalyzes the recognition and processing of DNA lesions. UvrC both incises the 5' and 3' sides of the lesion. The N-terminal half is responsible for the 3' incision and the C-terminal half is responsible for the 5' incision. The protein is UvrABC system protein C of Pseudomonas entomophila (strain L48).